We begin with the raw amino-acid sequence, 433 residues long: Glutamate-1-semialdehyde 2,1-aminomutase (433 aa).

The residue at position 269 (K269) is an N6-(pyridoxal phosphate)lysine.

This sequence belongs to the class-III pyridoxal-phosphate-dependent aminotransferase family. HemL subfamily. As to quaternary structure, homodimer. It depends on pyridoxal 5'-phosphate as a cofactor.

The protein resides in the cytoplasm. The enzyme catalyses (S)-4-amino-5-oxopentanoate = 5-aminolevulinate. It functions in the pathway porphyrin-containing compound metabolism; protoporphyrin-IX biosynthesis; 5-aminolevulinate from L-glutamyl-tRNA(Glu): step 2/2. In Francisella philomiragia subsp. philomiragia (strain ATCC 25017 / CCUG 19701 / FSC 153 / O#319-036), this protein is Glutamate-1-semialdehyde 2,1-aminomutase.